Here is a 1122-residue protein sequence, read N- to C-terminus: Transcription-repair-coupling factor (1122 aa).

Residues 593 to 758 form the Helicase ATP-binding domain; the sequence is DLRNGMLMDR…MTGLKELSII (166 aa). 606–613 contributes to the ATP binding site; the sequence is GDVGFGKT. The DEEQ box signature appears at 711–714; that stretch reads DEEQ. Positions 779–933 constitute a Helicase C-terminal domain; the sequence is IIRDALLREH…GFTIASRDMD (155 aa).

In the N-terminal section; belongs to the UvrB family. This sequence in the C-terminal section; belongs to the helicase family. RecG subfamily.

It localises to the cytoplasm. Its function is as follows. Couples transcription and DNA repair by recognizing RNA polymerase (RNAP) stalled at DNA lesions. Mediates ATP-dependent release of RNAP and its truncated transcript from the DNA, and recruitment of nucleotide excision repair machinery to the damaged site. The chain is Transcription-repair-coupling factor from Rickettsia conorii (strain ATCC VR-613 / Malish 7).